Consider the following 297-residue polypeptide: Protoheme IX farnesyltransferase (297 aa).

9 helical membrane passes run 23 to 43 (VTQL…PGMP), 49 to 69 (VFGT…NCLI), 93 to 113 (IQVL…LYHL), 117 to 137 (LTMW…TVIL), 144 to 164 (NIVI…AAVA), 171 to 191 (AWVL…ALAL), 215 to 235 (RLHI…PYAI), 238 to 258 (SGAL…WYAW), and 275 to 295 (FSIL…WVGL).

It belongs to the UbiA prenyltransferase family. Protoheme IX farnesyltransferase subfamily.

Its subcellular location is the cell inner membrane. The enzyme catalyses heme b + (2E,6E)-farnesyl diphosphate + H2O = Fe(II)-heme o + diphosphate. Its pathway is porphyrin-containing compound metabolism; heme O biosynthesis; heme O from protoheme: step 1/1. In terms of biological role, converts heme B (protoheme IX) to heme O by substitution of the vinyl group on carbon 2 of heme B porphyrin ring with a hydroxyethyl farnesyl side group. This chain is Protoheme IX farnesyltransferase, found in Bordetella pertussis (strain Tohama I / ATCC BAA-589 / NCTC 13251).